The primary structure comprises 536 residues: Potassium voltage-gated channel protein shk-1 (536 aa).

2 disordered regions span residues 1–31 (MRFGGQRRCIESSDDNDSIDSMSIQQKNKEK) and 87–131 (AAEM…HPYT). Topologically, residues 1-275 (MRFGGQRRCI…EYPDSSLSAR (275 aa)) are cytoplasmic. Polar residues predominate over residues 116–131 (QRGTPDTSSTQGHPYT). Residues 276-296 (IIAFISIAVIALSIISFCWET) traverse the membrane as a helical segment. The Extracellular segment spans residues 297–322 (VPSDIEEKPINNSATAELLDEMDEKH). The helical transmembrane segment at 323–343 (YSPFFWIELMCILWFTIELIL) threads the bilayer. The Cytoplasmic portion of the chain corresponds to 344 to 356 (RFISCPCKVTFAT). The helical transmembrane segment at 357–377 (SVLNIIDFVAIAPFFVNFFFA) threads the bilayer. The Extracellular portion of the chain corresponds to 378 to 425 (DTSKSNSSMSFAVLRVLRLVRVFRVFKLSRHSVGLQILGKTFRSSVQE). Residues 426–446 (FCLLIFFMAIALVLFASGMYF) form a helical; Voltage-sensor membrane-spanning segment. The Cytoplasmic portion of the chain corresponds to 447 to 458 (AEQGEPNSKFTS). A helical transmembrane segment spans residues 459-479 (IPASFWFVLVTMTTVGYGDLV). Residues 480–486 (PLSPFGK) lie on the Extracellular side of the membrane. Residues 487–507 (VVGGMCAMIGVLTLALPVPII) traverse the membrane as a helical segment. Residues 508-536 (VANFKHFYRQENRLASMKSKGDDADDDIA) lie on the Cytoplasmic side of the membrane.

The protein belongs to the potassium channel family. A (Shaker) (TC 1.A.1.2) subfamily. Shaker sub-subfamily. Expressed in a variety of interneurons and sensory neurons, as well as body wall muscle.

The protein resides in the membrane. Mediates the voltage-dependent potassium ion permeability of excitable membranes. Has an important role in repolarization and in regulating the pattern of action potential firing. Isoform a expresses currents in a more depolarized voltage range than isoform d. The polypeptide is Potassium voltage-gated channel protein shk-1 (Caenorhabditis elegans).